A 230-amino-acid chain; its full sequence is Heptaprenylglyceryl phosphate synthase (230 aa).

K12 lines the sn-glycerol 1-phosphate pocket. 2 residues coordinate Mg(2+): D14 and T40. Sn-glycerol 1-phosphate is bound by residues 159-164 (YIEYSG), G189, and 209-210 (GD).

Belongs to the GGGP/HepGP synthase family. Group I subfamily. As to quaternary structure, homodimer. Requires Mg(2+) as cofactor.

The enzyme catalyses sn-glycerol 1-phosphate + all-trans-heptaprenyl diphosphate = 3-heptaprenyl-sn-glycero-1-phosphate + diphosphate. It functions in the pathway membrane lipid metabolism; glycerophospholipid metabolism. Its function is as follows. Prenyltransferase that catalyzes in vivo the transfer of the heptaprenyl moiety of heptaprenyl pyrophosphate (HepPP; 35 carbon atoms) to the C3 hydroxyl of sn-glycerol-1-phosphate (G1P), producing heptaprenylglyceryl phosphate (HepGP). This reaction is an ether-bond-formation step in the biosynthesis of archaea-type G1P-based membrane lipids found in Bacillales. In Staphylococcus aureus (strain MRSA252), this protein is Heptaprenylglyceryl phosphate synthase.